The primary structure comprises 153 residues: Ribosomal RNA large subunit methyltransferase H (153 aa).

S-adenosyl-L-methionine is bound by residues leucine 70, glycine 102, and 121-126 (FSKMTF).

The protein belongs to the RNA methyltransferase RlmH family. In terms of assembly, homodimer.

The protein localises to the cytoplasm. It carries out the reaction pseudouridine(1915) in 23S rRNA + S-adenosyl-L-methionine = N(3)-methylpseudouridine(1915) in 23S rRNA + S-adenosyl-L-homocysteine + H(+). Functionally, specifically methylates the pseudouridine at position 1915 (m3Psi1915) in 23S rRNA. In Desulfotalea psychrophila (strain LSv54 / DSM 12343), this protein is Ribosomal RNA large subunit methyltransferase H.